A 194-amino-acid polypeptide reads, in one-letter code: Protein cholesin (194 aa).

Residues 1–83 (MAKQKRKVPE…RKKEERQRLR (83 aa)) are disordered. Phosphoserine is present on residues Ser23 and Ser59. Residues 61 to 83 (EEQRVLERKLKKERKKEERQRLR) are compositionally biased toward basic and acidic residues. Phosphoserine is present on residues Ser97 and Ser175.

In terms of tissue distribution, secreted from the instestine, secretion is induced by feeding and cholesterol absorption.

It is found in the secreted. Its function is as follows. Hormone secreted from the intestine in response to cholesterol, where it acts to inhibit cholesterol synthesis in the liver and VLDL secretion,leading to a reduction in circulating cholesterol levels. Acts through binding to its receptor, GPR146. This Homo sapiens (Human) protein is Protein cholesin.